Reading from the N-terminus, the 368-residue chain is Glutamate 5-kinase 1 (368 aa).

Lys-12 lines the ATP pocket. Substrate is bound by residues Ser-52, Asp-135, and Asn-147. Residues 167–168 (SD) and 209–215 (TGGMKTK) each bind ATP. Residues 274–348 (QGEVVVDGSF…DNEQSEFSEK (75 aa)) enclose the PUA domain.

This sequence belongs to the glutamate 5-kinase family.

It localises to the cytoplasm. It carries out the reaction L-glutamate + ATP = L-glutamyl 5-phosphate + ADP. The protein operates within amino-acid biosynthesis; L-proline biosynthesis; L-glutamate 5-semialdehyde from L-glutamate: step 1/2. Catalyzes the transfer of a phosphate group to glutamate to form L-glutamate 5-phosphate. This is Glutamate 5-kinase 1 from Pseudoalteromonas translucida (strain TAC 125).